Here is a 480-residue protein sequence, read N- to C-terminus: Protein nucleotidyltransferase YdiU (480 aa).

Residues glycine 86, glycine 88, arginine 89, lysine 109, aspartate 121, glycine 122, arginine 172, and arginine 179 each coordinate ATP. The active-site Proton acceptor is aspartate 248. Residues asparagine 249 and aspartate 258 each coordinate Mg(2+). Aspartate 258 provides a ligand contact to ATP.

The protein belongs to the SELO family. It depends on Mg(2+) as a cofactor. The cofactor is Mn(2+).

The enzyme catalyses L-seryl-[protein] + ATP = 3-O-(5'-adenylyl)-L-seryl-[protein] + diphosphate. It catalyses the reaction L-threonyl-[protein] + ATP = 3-O-(5'-adenylyl)-L-threonyl-[protein] + diphosphate. The catalysed reaction is L-tyrosyl-[protein] + ATP = O-(5'-adenylyl)-L-tyrosyl-[protein] + diphosphate. It carries out the reaction L-histidyl-[protein] + UTP = N(tele)-(5'-uridylyl)-L-histidyl-[protein] + diphosphate. The enzyme catalyses L-seryl-[protein] + UTP = O-(5'-uridylyl)-L-seryl-[protein] + diphosphate. It catalyses the reaction L-tyrosyl-[protein] + UTP = O-(5'-uridylyl)-L-tyrosyl-[protein] + diphosphate. Its function is as follows. Nucleotidyltransferase involved in the post-translational modification of proteins. It can catalyze the addition of adenosine monophosphate (AMP) or uridine monophosphate (UMP) to a protein, resulting in modifications known as AMPylation and UMPylation. The protein is Protein nucleotidyltransferase YdiU of Salmonella agona (strain SL483).